A 747-amino-acid chain; its full sequence is Sulfhydryl oxidase 1 (747 aa).

The N-terminal stretch at 1–29 (MRRCNSGSGPPPSLLLLLLWLLAVPGANA) is a signal peptide. The 121-residue stretch at 36–156 (YSPSDPLTLL…RERLIDALES (121 aa)) folds into the Thioredoxin domain. Active-site nucleophile residues include Cys70 and Cys73. Intrachain disulfides connect Cys70-Cys73 and Cys101-Cys110. Asn130 carries N-linked (GlcNAc...) (complex) asparagine glycosylation. Asn243 is a glycosylation site (N-linked (GlcNAc...) asparagine). A disulfide bridge links Cys393 with Cys405. The region spanning 396–503 (SEPHFRGFPC…EDPQFPKVQW (108 aa)) is the ERV/ALR sulfhydryl oxidase domain. The FAD site is built by Arg401, Trp408, and His412. Ser426 carries the phosphoserine; by FAM20C modification. Residues Cys449 and Cys452 are joined by a disulfide bond. FAD-binding positions include Asp451, His455, 478-485 (WSSHNRVN), Lys500, and Trp503. An intrachain disulfide couples Cys509 to Cys512. Positions 573 to 633 (SRNSTLDPGK…HMAELQRNEQ (61 aa)) are disordered. An N-linked (GlcNAc...) asparagine glycan is attached at Asn575. Positions 621–633 (PPEHMAELQRNEQ) are enriched in basic and acidic residues. Residues 710–730 (ISLCVGLYSLSFMGLLAMYTY) form a helical membrane-spanning segment.

This sequence belongs to the quiescin-sulfhydryl oxidase (QSOX) family. Monomer. It depends on FAD as a cofactor. In terms of processing, N-glycosylated. O-glycosylated on Thr and Ser residues. Expressed in heart, placenta, lung, liver, skeletal muscle, pancreas and very weakly in brain and kidney.

It localises to the golgi apparatus membrane. The protein localises to the secreted. It catalyses the reaction 2 R'C(R)SH + O2 = R'C(R)S-S(R)CR' + H2O2. Catalyzes the oxidation of sulfhydryl groups in peptide and protein thiols to disulfides with the reduction of oxygen to hydrogen peroxide. Plays a role in disulfide bond formation in a variety of extracellular proteins. In fibroblasts, required for normal incorporation of laminin into the extracellular matrix, and thereby for normal cell-cell adhesion and cell migration. The chain is Sulfhydryl oxidase 1 (QSOX1) from Homo sapiens (Human).